The sequence spans 337 residues: Inositol 2-dehydrogenase (337 aa).

The protein belongs to the Gfo/Idh/MocA family. Homotetramer.

The enzyme catalyses myo-inositol + NAD(+) = scyllo-inosose + NADH + H(+). Involved in the oxidation of myo-inositol (MI) to 2-keto-myo-inositol (2KMI or 2-inosose). This Corynebacterium glutamicum (strain R) protein is Inositol 2-dehydrogenase.